The sequence spans 147 residues: MAIGVTQNTFQLNIVSAEGPLFSGKAHALAISGLDGELGIRPGHSPLLSRIKPGVAYFQTDLKGDDEILYISGGILEVQPSLVTVLADTAMHGKDIDEARANEARRAAEENINKQGNDINFAQAQMDLAKAMAQLRAVELTQKQRRR.

The protein belongs to the ATPase epsilon chain family. As to quaternary structure, F-type ATPases have 2 components, CF(1) - the catalytic core - and CF(0) - the membrane proton channel. CF(1) has five subunits: alpha(3), beta(3), gamma(1), delta(1), epsilon(1). CF(0) has three main subunits: a, b and c.

It is found in the cell inner membrane. In terms of biological role, produces ATP from ADP in the presence of a proton gradient across the membrane. In Photobacterium profundum (strain SS9), this protein is ATP synthase epsilon chain 2.